The primary structure comprises 173 residues: NADH-quinone oxidoreductase subunit B 2 (173 aa).

[4Fe-4S] cluster contacts are provided by C42, C43, C107, and C137.

It belongs to the complex I 20 kDa subunit family. NDH-1 is composed of 14 different subunits. Subunits NuoB, C, D, E, F, and G constitute the peripheral sector of the complex. [4Fe-4S] cluster is required as a cofactor.

The protein localises to the cell inner membrane. It catalyses the reaction a quinone + NADH + 5 H(+)(in) = a quinol + NAD(+) + 4 H(+)(out). Functionally, NDH-1 shuttles electrons from NADH, via FMN and iron-sulfur (Fe-S) centers, to quinones in the respiratory chain. Couples the redox reaction to proton translocation (for every two electrons transferred, four hydrogen ions are translocated across the cytoplasmic membrane), and thus conserves the redox energy in a proton gradient. This chain is NADH-quinone oxidoreductase subunit B 2, found in Anaeromyxobacter dehalogenans (strain 2CP-C).